The sequence spans 509 residues: ATP synthase subunit alpha (509 aa).

169–176 is a binding site for ATP; it reads GDRQTGKT.

The protein belongs to the ATPase alpha/beta chains family. As to quaternary structure, F-type ATPases have 2 components, CF(1) - the catalytic core - and CF(0) - the membrane proton channel. CF(1) has five subunits: alpha(3), beta(3), gamma(1), delta(1), epsilon(1). CF(0) has three main subunits: a(1), b(2) and c(9-12). The alpha and beta chains form an alternating ring which encloses part of the gamma chain. CF(1) is attached to CF(0) by a central stalk formed by the gamma and epsilon chains, while a peripheral stalk is formed by the delta and b chains.

Its subcellular location is the cell inner membrane. The enzyme catalyses ATP + H2O + 4 H(+)(in) = ADP + phosphate + 5 H(+)(out). Its function is as follows. Produces ATP from ADP in the presence of a proton gradient across the membrane. The alpha chain is a regulatory subunit. This chain is ATP synthase subunit alpha, found in Brucella canis (strain ATCC 23365 / NCTC 10854 / RM-666).